A 131-amino-acid polypeptide reads, in one-letter code: Profilin (131 aa).

Belongs to the profilin family. As to quaternary structure, occurs in many kinds of cells as a complex with monomeric actin in a 1:1 ratio.

The protein localises to the cytoplasm. The protein resides in the cytoskeleton. Binds to actin and affects the structure of the cytoskeleton. At high concentrations, profilin prevents the polymerization of actin, whereas it enhances it at low concentrations. By binding to PIP2, it inhibits the formation of IP3 and DG. The sequence is that of Profilin from Capsicum annuum (Capsicum pepper).